We begin with the raw amino-acid sequence, 366 residues long: Nitronate monooxygenase (366 aa).

FMN-binding positions include Asn74, Gln181, Gly186, Gly223, and 242–245 (QLGT).

The protein belongs to the nitronate monooxygenase family. NMO class I subfamily. The cofactor is FMN.

The catalysed reaction is 3 propionate 3-nitronate + 3 O2 + H2O = 3 3-oxopropanoate + 2 nitrate + nitrite + H2O2 + 3 H(+). Functionally, nitronate monooxygenase that uses molecular oxygen to catalyze the oxidative denitrification of alkyl nitronates. Acts on propionate 3-nitronate (P3N), the presumed physiological substrate. Is likely involved in the degradation of P3N, that allows B.phytofirmans PsJN to grow on 3-nitropropionate/P3N as the sole source of nitrogen and carbon. Also probably functions in the detoxification of P3N, a metabolic poison produced by plants and fungi as a defense mechanism. Cannot oxidize nitroalkanes such as 3-nitropropionate, nitroethane, or 1-nitropropane. This chain is Nitronate monooxygenase, found in Paraburkholderia phytofirmans (strain DSM 17436 / LMG 22146 / PsJN) (Burkholderia phytofirmans).